Here is a 461-residue protein sequence, read N- to C-terminus: Photosystem II CP43 reaction center protein (461 aa).

Helical transmembrane passes span 57 to 81 (LFEVAHFVPEKPMYEQGIILLSHLA), 122 to 143 (LRGPESLEEYSTFFSQDWKDKN), 166 to 188 (KAMFFGGVYDTWAPGGGDVRIIS), 243 to 263 (KPFGWVRRAFIWNGEAYLSYS), and 279 to 300 (WYNNTVYPSEFFGPTAAEASQS). A [CaMn4O5] cluster-binding site is contributed by E355. Residues 435–459 (RARAAAAGFEKGIDRATEPVLAMRD) traverse the membrane as a helical segment.

The protein belongs to the PsbB/PsbC family. PsbC subfamily. As to quaternary structure, PSII is composed of 1 copy each of membrane proteins PsbA, PsbB, PsbC, PsbD, PsbE, PsbF, PsbH, PsbI, PsbJ, PsbK, PsbL, PsbM, PsbT, PsbX, PsbY, PsbZ, Psb30/Ycf12, peripheral proteins PsbO, CyanoQ (PsbQ), PsbU, PsbV and a large number of cofactors. It forms dimeric complexes. The cofactor is Binds multiple chlorophylls and provides some of the ligands for the Ca-4Mn-5O cluster of the oxygen-evolving complex. It may also provide a ligand for a Cl- that is required for oxygen evolution. PSII binds additional chlorophylls, carotenoids and specific lipids..

The protein localises to the cellular thylakoid membrane. Functionally, one of the components of the core complex of photosystem II (PSII). It binds chlorophyll and helps catalyze the primary light-induced photochemical processes of PSII. PSII is a light-driven water:plastoquinone oxidoreductase, using light energy to abstract electrons from H(2)O, generating O(2) and a proton gradient subsequently used for ATP formation. This is Photosystem II CP43 reaction center protein from Synechococcus elongatus (strain ATCC 33912 / PCC 7942 / FACHB-805) (Anacystis nidulans R2).